We begin with the raw amino-acid sequence, 430 residues long: Adenylosuccinate synthetase (430 aa).

GTP-binding positions include 12–18 (GDEGKGK) and 40–42 (GHT). Aspartate 13 functions as the Proton acceptor in the catalytic mechanism. The Mg(2+) site is built by aspartate 13 and glycine 40. IMP-binding positions include 13–16 (DEGK), 38–41 (NAGH), threonine 128, arginine 142, glutamine 223, threonine 238, and arginine 302. Catalysis depends on histidine 41, which acts as the Proton donor. 298-304 (VNTGRTR) contributes to the substrate binding site. GTP is bound by residues arginine 304, 330–332 (KLD), and 412–414 (GVG).

The protein belongs to the adenylosuccinate synthetase family. As to quaternary structure, homodimer. Mg(2+) serves as cofactor.

The protein localises to the cytoplasm. It carries out the reaction IMP + L-aspartate + GTP = N(6)-(1,2-dicarboxyethyl)-AMP + GDP + phosphate + 2 H(+). It participates in purine metabolism; AMP biosynthesis via de novo pathway; AMP from IMP: step 1/2. Functionally, plays an important role in the de novo pathway of purine nucleotide biosynthesis. Catalyzes the first committed step in the biosynthesis of AMP from IMP. This Corynebacterium ammoniagenes (Brevibacterium ammoniagenes) protein is Adenylosuccinate synthetase.